The following is a 127-amino-acid chain: Translation initiation factor 5A (127 aa).

At Lys35 the chain carries Hypusine.

It belongs to the eIF-5A family.

The protein resides in the cytoplasm. Functions by promoting the formation of the first peptide bond. This chain is Translation initiation factor 5A (eIF5A), found in Methanothrix thermoacetophila (strain DSM 6194 / JCM 14653 / NBRC 101360 / PT) (Methanosaeta thermophila).